Here is a 293-residue protein sequence, read N- to C-terminus: Nucleotide-binding protein BcerKBAB4_4948 (293 aa).

An ATP-binding site is contributed by 14–21; that stretch reads GMSGAGKT. 65–68 is a GTP binding site; the sequence is DLRG.

It belongs to the RapZ-like family.

Displays ATPase and GTPase activities. The polypeptide is Nucleotide-binding protein BcerKBAB4_4948 (Bacillus mycoides (strain KBAB4) (Bacillus weihenstephanensis)).